The chain runs to 204 residues: LexA repressor (204 aa).

A DNA-binding region (H-T-H motif) is located at residues 28 to 48; the sequence is RAEIAQELGFKSPNAAEEHLK. Catalysis depends on for autocatalytic cleavage activity residues Ser125 and Lys162.

Belongs to the peptidase S24 family. As to quaternary structure, homodimer.

The catalysed reaction is Hydrolysis of Ala-|-Gly bond in repressor LexA.. Represses a number of genes involved in the response to DNA damage (SOS response), including recA and lexA. In the presence of single-stranded DNA, RecA interacts with LexA causing an autocatalytic cleavage which disrupts the DNA-binding part of LexA, leading to derepression of the SOS regulon and eventually DNA repair. This chain is LexA repressor, found in Ectopseudomonas mendocina (strain ymp) (Pseudomonas mendocina).